Consider the following 392-residue polypeptide: Transcription factor GATA-4 (392 aa).

Positions 75-113 are disordered; that stretch reads SSAYNPGTSHPPVSPRFTFSSSPPITAPSSREVSYSSPL. Over residues 91 to 113 the composition is skewed to polar residues; it reads FTFSSSPPITAPSSREVSYSSPL. 2 GATA-type zinc fingers span residues 184–208 and 238–262; these read CVNC…CNAC and CANC…CNAC. 2 disordered regions span residues 279 to 339 and 359 to 392; these read KEGI…HSNS and MPSL…LVLA. Basic residues predominate over residues 284 to 293; that stretch reads TRKRKPKNLS. Low complexity predominate over residues 302–316; sequence SGSDSLTPSTSSTNS. The span at 364–380 shows a compositional bias: polar residues; it reads LSPQNHHSTFNPSPQAN.

Expressed at high levels in heart, small intestine, stomach, ovary, and liver. Found at much lower levels in lung, spleen, pancreas and skin.

It is found in the nucleus. Its function is as follows. Transcriptional activator that binds to the consensus sequence 5'-AGATAG-3'. Associated with cardiac specification and can regulate cardiac-specific transcription during embryogenesis. Activates the expression of cardiac MHC-alpha in vivo. The chain is Transcription factor GATA-4 (gata4) from Xenopus laevis (African clawed frog).